Here is a 558-residue protein sequence, read N- to C-terminus: MVFPIRILVLFALLAFPACVHGAIRKYTFNVVTKQVTRICSTKQIVTVNGKFPGPTIYANEDDTILVNVVNNVKYNVSIHWHGIRQLRTGWADGPAYITQCPIKPGHSYVYNFTVTGQRGTLWWHAHVLWLRATVHGAIVILPKLGLPYPFPKPHREEVIILGEWWKSDTETVVNEALKSGLAPNVSDAHVINGHPGFVPNCPSQGNFKLAVESGKTYMLRLINAALNEELFFKIAGHRFTVVEVDAVYVKPFNTDTILIAPGQTTTALVSAARPSGQYLIAAAPFQDSAVVAVDNRTATATVHYSGTLSATPTKTTSPPPQNATSVANTFVNSLRSLNSKTYPANVPITVDHDLLFTVGLGINRCHSCKAGNFSRVVAAINNITFKMPKTALLQAHYFNLTGIYTTDFPAKPRRVFDFTGKPPSNLATMKATKLYKLPYNSTVQVVLQDTGNVAPENHPIHLHGFNFFVVGLGTGNYNSKKDSNKFNLVDPVERNTVGVPSGGWAAIRFRADNPGVWFMHCHLEVHTTWGLKMAFLVENGKGPNQSIRPPPSDLPKC.

The signal sequence occupies residues 1–22; it reads MVFPIRILVLFALLAFPACVHG. 2 consecutive Plastocyanin-like domains span residues 30–146 and 157–308; these read NVVT…PKLG and EEVI…YSGT. A glycan (N-linked (GlcNAc...) asparagine) is linked at Asn-76. 2 residues coordinate Cu cation: His-80 and His-82. A glycan (N-linked (GlcNAc...) asparagine) is linked at Asn-112. Residues His-125 and His-127 each contribute to the Cu cation site. N-linked (GlcNAc...) asparagine glycans are attached at residues Asn-185, Asn-296, Asn-323, Asn-373, Asn-383, Asn-400, and Asn-441. The Plastocyanin-like 3 domain occupies 408 to 542; sequence DFPAKPRRVF…KMAFLVENGK (135 aa). Cu cation is bound by residues His-459, His-462, His-464, His-521, Cys-522, His-523, and His-527. Asn-545 carries an N-linked (GlcNAc...) asparagine glycan.

It belongs to the multicopper oxidase family. It depends on Cu cation as a cofactor. Ubiquitous, with lower levels in siliques.

Its subcellular location is the secreted. It is found in the extracellular space. The protein localises to the apoplast. The catalysed reaction is 4 hydroquinone + O2 = 4 benzosemiquinone + 2 H2O. Functionally, lignin degradation and detoxification of lignin-derived products. The polypeptide is Laccase-10 (LAC10) (Arabidopsis thaliana (Mouse-ear cress)).